A 276-amino-acid polypeptide reads, in one-letter code: NADPH-dependent 7-cyano-7-deazaguanine reductase (276 aa).

83–85 contributes to the substrate binding site; it reads IES. 85 to 86 provides a ligand contact to NADPH; the sequence is SK. Cysteine 184 (thioimide intermediate) is an active-site residue. The active-site Proton donor is aspartate 191. 223 to 224 serves as a coordination point for substrate; the sequence is HE. Residue 252–253 coordinates NADPH; it reads RG.

The protein belongs to the GTP cyclohydrolase I family. QueF type 2 subfamily. In terms of assembly, homodimer.

It localises to the cytoplasm. The enzyme catalyses 7-aminomethyl-7-carbaguanine + 2 NADP(+) = 7-cyano-7-deazaguanine + 2 NADPH + 3 H(+). It participates in tRNA modification; tRNA-queuosine biosynthesis. Catalyzes the NADPH-dependent reduction of 7-cyano-7-deazaguanine (preQ0) to 7-aminomethyl-7-deazaguanine (preQ1). In Pseudomonas aeruginosa (strain ATCC 15692 / DSM 22644 / CIP 104116 / JCM 14847 / LMG 12228 / 1C / PRS 101 / PAO1), this protein is NADPH-dependent 7-cyano-7-deazaguanine reductase.